Consider the following 88-residue polypeptide: DNA-directed RNA polymerase subunit omega (88 aa).

The protein belongs to the RNA polymerase subunit omega family. As to quaternary structure, the RNAP catalytic core consists of 2 alpha, 1 beta, 1 beta' and 1 omega subunit. When a sigma factor is associated with the core the holoenzyme is formed, which can initiate transcription.

It catalyses the reaction RNA(n) + a ribonucleoside 5'-triphosphate = RNA(n+1) + diphosphate. In terms of biological role, promotes RNA polymerase assembly. Latches the N- and C-terminal regions of the beta' subunit thereby facilitating its interaction with the beta and alpha subunits. The polypeptide is DNA-directed RNA polymerase subunit omega (Kineococcus radiotolerans (strain ATCC BAA-149 / DSM 14245 / SRS30216)).